Reading from the N-terminus, the 618-residue chain is uncharacterized protein (618 aa).

A signal peptide spans 1 to 29; sequence MSFLVLPPEVNSALMFAGAGSGPTLAAAA. A disordered region spans residues 598–618; that stretch reads SGDNSSGGFNAGNDQSGFFDG.

It belongs to the mycobacterial PPE family.

This is an uncharacterized protein from Mycobacterium tuberculosis (strain ATCC 25618 / H37Rv).